The primary structure comprises 1430 residues: rRNA biogenesis protein RRP5 (1430 aa).

S1 motif domains are found at residues 74–160, 176–238, 261–329, 447–511, 531–592, and 697–771; these read DMLV…LSLK, GFIF…CTCV, GSIV…LTLN, GDLV…VSNR, GNVY…LTLP, and QVGD…VSAK. The segment at 1041–1145 is disordered; that stretch reads KITNGQKKTQ…AKEKAKAEIK (105 aa). The segment covering 1043–1053 has biased composition (polar residues); the sequence is TNGQKKTQPLT. Composition is skewed to basic and acidic residues over residues 1057 to 1082 and 1135 to 1145; these read VKEKPKQNGKLFFEDKTPAKNAKSET and SAKEKAKAEIK. Residues 1119-1157 are a coiled coil; sequence LNVAETQKNAAKKKRLSAKEKAKAEIKEEQRLREIEERN. 6 HAT repeats span residues 1161–1193, 1195–1232, 1265–1297, 1299–1333, 1335–1367, and 1369–1404; these read KARLETIDQYERLVIAQPNNSISWLKYIAFLLS, TEIEKARALARRAISTISFRETQELRNMWSALLNMELV, KRKDRLSSVLTTVLNKFKTELRVWPVAAEAYFW, GKSDQVHNLLQRALRALPNQEHIPCIVSFAKLYAK, DNNDMAQTLLDDVVTSYPKRIDIWSVYVDMLIK, and GLIDSARNVLERAVVQKLKPNKMQVIYKKYLQLEEN.

The protein localises to the nucleus. The protein resides in the nucleolus. Involved in rRNA processing or maturation during ribosome biogenesis. This Drosophila melanogaster (Fruit fly) protein is rRNA biogenesis protein RRP5.